We begin with the raw amino-acid sequence, 565 residues long: Urocanate hydratase (565 aa).

NAD(+)-binding positions include 61-62 (GG), Q139, 185-187 (GMG), E205, R210, 251-252 (NA), 272-276 (QTSAH), 282-283 (YL), and Y331. The active site involves C419. Positions 453 to 472 (LDSGSVASPNRETESMRDGS) are disordered. The span at 463–472 (RETESMRDGS) shows a compositional bias: basic and acidic residues. Position 501 (G501) interacts with NAD(+).

This sequence belongs to the urocanase family. NAD(+) is required as a cofactor.

Its subcellular location is the cytoplasm. The enzyme catalyses 4-imidazolone-5-propanoate = trans-urocanate + H2O. The protein operates within amino-acid degradation; L-histidine degradation into L-glutamate; N-formimidoyl-L-glutamate from L-histidine: step 2/3. Functionally, catalyzes the conversion of urocanate to 4-imidazolone-5-propionate. The chain is Urocanate hydratase from Pseudomonas savastanoi pv. phaseolicola (strain 1448A / Race 6) (Pseudomonas syringae pv. phaseolicola (strain 1448A / Race 6)).